A 420-amino-acid polypeptide reads, in one-letter code: 3-phosphoshikimate 1-carboxyvinyltransferase (420 aa).

The 3-phosphoshikimate site is built by lysine 26, serine 27, and arginine 31. Lysine 26 contributes to the phosphoenolpyruvate binding site. Glycine 97 and arginine 125 together coordinate phosphoenolpyruvate. Positions 170, 171, 172, 297, 320, and 324 each coordinate 3-phosphoshikimate. Glutamine 172 is a phosphoenolpyruvate binding site. Residue aspartate 297 is the Proton acceptor of the active site. Residues arginine 328, arginine 375, and lysine 400 each contribute to the phosphoenolpyruvate site.

Belongs to the EPSP synthase family. As to quaternary structure, monomer.

It localises to the cytoplasm. The enzyme catalyses 3-phosphoshikimate + phosphoenolpyruvate = 5-O-(1-carboxyvinyl)-3-phosphoshikimate + phosphate. It functions in the pathway metabolic intermediate biosynthesis; chorismate biosynthesis; chorismate from D-erythrose 4-phosphate and phosphoenolpyruvate: step 6/7. In terms of biological role, catalyzes the transfer of the enolpyruvyl moiety of phosphoenolpyruvate (PEP) to the 5-hydroxyl of shikimate-3-phosphate (S3P) to produce enolpyruvyl shikimate-3-phosphate and inorganic phosphate. In Rhizobium leguminosarum bv. trifolii (strain WSM2304), this protein is 3-phosphoshikimate 1-carboxyvinyltransferase.